We begin with the raw amino-acid sequence, 1322 residues long: BRCA2-interacting transcriptional repressor EMSY (1322 aa).

The interval 1–478 is interaction with BRCA2; sequence MPVVWPTLLD…LPKPVTATLP (478 aa). Residues 16-100 form the ENT domain; it reads CKRILRKLEL…EWSIEGRRLV (85 aa). Residues 104–108 form an interaction with ZMYND11 region; sequence PRLVP. The segment covering 148–162 has biased composition (low complexity); that stretch reads STTSTPTSTPVPSGS. Disordered stretches follow at residues 148-178 and 192-215; these read STTS…ASNV and VSCS…SSPV. Threonine 207 is subject to Phosphothreonine. Phosphoserine is present on residues serine 209 and serine 213. O-linked (GlcNAc) serine glycans are attached at residues serine 228 and serine 236. The residue at position 238 (serine 238) is a Phosphoserine. A glycan (O-linked (GlcNAc) threonine) is linked at threonine 271. Positions 417-437 are enriched in low complexity; it reads QQTQQQVAQPSPVSHQQQPQQ. The tract at residues 417-444 is disordered; it reads QQTQQQVAQPSPVSHQQQPQQSPLPPGI. O-linked (GlcNAc) threonine glycans are attached at residues threonine 501 and threonine 506. Serine 557 carries an O-linked (GlcNAc) serine glycan. A compositionally biased stretch (polar residues) spans 698 to 707; the sequence is VAEAGNSSIQ. The interval 698–736 is disordered; that stretch reads VAEAGNSSIQEGKEEPQNYTDSSSSSTESSQSSQDSQPV. Positions 717-734 are enriched in low complexity; sequence TDSSSSSTESSQSSQDSQ. Phosphoserine is present on residues serine 818 and serine 821. Residue threonine 1120 is glycosylated (O-linked (GlcNAc) threonine). Serine 1136 is modified (phosphoserine). Residues 1205 to 1223 show a composition bias toward polar residues; that stretch reads QKCRESCSSPSTVGSSLTT. Disordered regions lie at residues 1205–1231 and 1290–1322; these read QKCR…PPAV and QLDD…AERS. Residues 1291 to 1310 show a composition bias toward acidic residues; sequence LDDEETAMEQDIDSSTEDGT. Positions 1312-1322 are enriched in polar residues; the sequence is PSPSQSSAERS.

Homodimer. Interacts with the transactivation domain of BRCA2. Interacts with CBX1 (via chromoshadow domain). Interacts with ZMYND11. Does not interact with CBX3 or CBX5. Component of a nuclear receptor-mediated transcription complex composed of at least ZNF335, CCAR2 and EMSY; the complex stimulates the transcription of nuclear receptor target genes such as SOX9 and HOXA1. Within the complex interacts with CCAR2 and ZNF335. Components of this complex may associate with components of a histone methylation complex to form a complex at least composed of ZNF335, HCFC1, CCAR2, EMSY, MKI67, RBBP5, ASH2L and WDR5. Within this complex, interacts with ASH2L and RBBP5. O-glycosylated during cytokinesis at sites identical or close to phosphorylation sites, this interferes with the phosphorylation status.

The protein resides in the nucleus. Regulator which is able to repress transcription, possibly via its interaction with a multiprotein chromatin remodeling complex that modifies the chromatin. Its interaction with BRCA2 suggests that it may play a central role in the DNA repair function of BRCA2. Mediates ligand-dependent transcriptional activation by nuclear hormone receptors. The sequence is that of BRCA2-interacting transcriptional repressor EMSY from Homo sapiens (Human).